Consider the following 384-residue polypeptide: S-adenosylmethionine synthase (384 aa).

His-15 lines the ATP pocket. Residue Asp-17 coordinates Mg(2+). Glu-43 lines the K(+) pocket. L-methionine-binding residues include Glu-56 and Gln-99. Residues 99–109 form a flexible loop region; that stretch reads QSPDINQGVDR. Residues 164 to 166, 230 to 231, Asp-239, 245 to 246, Ala-262, and Lys-266 contribute to the ATP site; these read DAK, RF, and RK. Asp-239 lines the L-methionine pocket. An L-methionine-binding site is contributed by Lys-270.

This sequence belongs to the AdoMet synthase family. As to quaternary structure, homotetramer; dimer of dimers. Mg(2+) is required as a cofactor. The cofactor is K(+).

The protein localises to the cytoplasm. The enzyme catalyses L-methionine + ATP + H2O = S-adenosyl-L-methionine + phosphate + diphosphate. It participates in amino-acid biosynthesis; S-adenosyl-L-methionine biosynthesis; S-adenosyl-L-methionine from L-methionine: step 1/1. Functionally, catalyzes the formation of S-adenosylmethionine (AdoMet) from methionine and ATP. The overall synthetic reaction is composed of two sequential steps, AdoMet formation and the subsequent tripolyphosphate hydrolysis which occurs prior to release of AdoMet from the enzyme. The chain is S-adenosylmethionine synthase from Cronobacter sakazakii (strain ATCC BAA-894) (Enterobacter sakazakii).